A 180-amino-acid chain; its full sequence is Ribulose bisphosphate carboxylase small subunit, chloroplastic (180 aa).

The N-terminal 57 residues, 1–57, are a transit peptide targeting the chloroplast; the sequence is MVSSMMVSSAATFTRASPAQSSMVAPFTGLKSASAFPVTRKPNADLSHLPSNGGRVQ.

It belongs to the RuBisCO small chain family. As to quaternary structure, heterohexadecamer of 8 large and 8 small subunits.

It is found in the plastid. Its subcellular location is the chloroplast. Its function is as follows. RuBisCO catalyzes two reactions: the carboxylation of D-ribulose 1,5-bisphosphate, the primary event in carbon dioxide fixation, as well as the oxidative fragmentation of the pentose substrate. Both reactions occur simultaneously and in competition at the same active site. Although the small subunit is not catalytic it is essential for maximal activity. The protein is Ribulose bisphosphate carboxylase small subunit, chloroplastic of Musa acuminata (Banana).